We begin with the raw amino-acid sequence, 160 residues long: uncharacterized protein (160 aa).

The protein belongs to the Dps family.

This is an uncharacterized protein from Haemophilus influenzae (strain ATCC 51907 / DSM 11121 / KW20 / Rd).